The following is a 583-amino-acid chain: MKRSMYAGRVRKEHVGQEITLKGWVGRRRGLGGLIFIDLRDREGIMQLVINPESVEAEVMAKAESLRSEFVIEVTGTVVEREQANDNIPTGAVELQVTSLTVLNTAKTTPFEIKDGIEASDDTRLRYRYLDLRRPEMLNNFKLRAAVTHSIRNYLDDLEFIDVETPMLTKSTPEGARDYLVPSRVSKGHFYALPQSPQITKQLLMNAGFDRYYQIVKCFRDEDLRGDRQPEFTQVDLETSFLNEVEIQDIVEGLIAKVLKDTKGIDVTLPFPRMAYDHAMNFYGSDKPDTRFEMLLQDLTELVKEVDFKVFSEAPVVKAIVVKGAADSYSRKDIDKLTDYAKQFGAKGLAWVKVDKGELAGPVAKFLTGITEKLTASLQLEDKDLVLFVADELEVANNTLGALRNRLAKEQGLIDESKFNFLWIVDWPMFEWSEEEGRYMSAHHPFTLPTEETAHHLDGDLAQVRAVAYDIVLNGYELGGGSLRINQKDMQEQMFKALGFSAEDAHEQFGFLLEAMDYGFPPHGGLAIGLDRFVMLLAGEDNIREVIAFPKNNKASDPMTQAPSTVASAQLEELALDITLENE.

L-aspartate is bound at residue glutamate 174. The tract at residues 198-201 (QITK) is aspartate. L-aspartate is bound at residue arginine 220. ATP-binding positions include 220-222 (RDE) and glutamine 229. Histidine 443 contacts L-aspartate. Glutamate 477 provides a ligand contact to ATP. Arginine 484 is an L-aspartate binding site. 529–532 (GLDR) is an ATP binding site.

The protein belongs to the class-II aminoacyl-tRNA synthetase family. Type 1 subfamily. As to quaternary structure, homodimer.

It is found in the cytoplasm. It carries out the reaction tRNA(Asp) + L-aspartate + ATP = L-aspartyl-tRNA(Asp) + AMP + diphosphate. Catalyzes the attachment of L-aspartate to tRNA(Asp) in a two-step reaction: L-aspartate is first activated by ATP to form Asp-AMP and then transferred to the acceptor end of tRNA(Asp). The chain is Aspartate--tRNA ligase from Streptococcus suis (strain 98HAH33).